Here is a 2555-residue protein sequence, read N- to C-terminus: Ubiquitin carboxyl-terminal hydrolase 9Y (2555 aa).

The interval 1 to 66 (MTAITHGSPV…APPQHEDEEP (66 aa)) is disordered. The segment covering 13–45 (NDSQGQVLDGQSQHLFQQNQTSSPDSSNENSVA) has biased composition (polar residues). Phosphoserine is present on Ser-589. Thr-591 is modified (phosphothreonine). Residues 972 to 997 (NMPSSPDSSSDSSTASPGNHRNHYND) form a disordered region. A compositionally biased stretch (low complexity) spans 974 to 984 (PSSPDSSSDSS). The USP domain occupies 1559–1958 (VGLKNAGATC…NAYILFYEQM (400 aa)). The Nucleophile role is filled by Cys-1568. 4 residues coordinate Zn(2+): Cys-1729, His-1731, Cys-1773, and Cys-1776. His-1881 serves as the catalytic Proton acceptor. At Ser-2444 the chain carries Phosphoserine. A compositionally biased stretch (acidic residues) spans 2476–2485 (PEEEPDDQDA). Positions 2476 to 2555 (PEEEPDDQDA…EVSSPQMKDQ (80 aa)) are disordered. Composition is skewed to polar residues over residues 2504-2514 (PASQYQQNNHV) and 2528-2555 (NNPQKTGQRTQENYEGNEEVSSPQMKDQ). At Tyr-2541 the chain carries Phosphotyrosine. Ser-2548 bears the Phosphoserine mark.

The protein belongs to the peptidase C19 family. As to expression, widely expressed in embryonic and adult tissues.

The catalysed reaction is Thiol-dependent hydrolysis of ester, thioester, amide, peptide and isopeptide bonds formed by the C-terminal Gly of ubiquitin (a 76-residue protein attached to proteins as an intracellular targeting signal).. Its pathway is protein modification; protein ubiquitination. Functionally, deubiquitinase that mediates deubiquitination of target proteins. May stabilize target proteins that are important for male germ cell development. The polypeptide is Ubiquitin carboxyl-terminal hydrolase 9Y (Homo sapiens (Human)).